We begin with the raw amino-acid sequence, 185 residues long: Ribosome-recycling factor (185 aa).

The protein belongs to the RRF family.

It is found in the cytoplasm. Its function is as follows. Responsible for the release of ribosomes from messenger RNA at the termination of protein biosynthesis. May increase the efficiency of translation by recycling ribosomes from one round of translation to another. This is Ribosome-recycling factor from Kocuria rhizophila (strain ATCC 9341 / DSM 348 / NBRC 103217 / DC2201).